We begin with the raw amino-acid sequence, 843 residues long: Taste receptor type 1 member 2 (843 aa).

An N-terminal signal peptide occupies residues 1 to 19 (MGPQARTLCLLSLLLHVLP). Topologically, residues 20–570 (KPGKLVENSD…TFLEWHEVPT (551 aa)) are extracellular. 9 N-linked (GlcNAc...) asparagine glycosylation sites follow: asparagine 87, asparagine 296, asparagine 316, asparagine 355, asparagine 372, asparagine 432, asparagine 484, asparagine 491, and asparagine 531. A helical membrane pass occupies residues 571-591 (IVVAILAALGFFSTLAILFIF). The Cytoplasmic portion of the chain corresponds to 592-606 (WRHFQTPMVRSAGGP). A helical transmembrane segment spans residues 607–627 (MCFLMLVPLLLAFGMVPVYVG). Topologically, residues 628–642 (PPTVFSCFCRQAFFT) are extracellular. Residues 643–663 (VCFSICLSCITVRSFQIVCVF) form a helical membrane-spanning segment. The Cytoplasmic portion of the chain corresponds to 664–682 (KMARRLPSAYSFWMRYHGP). Residues 683–703 (YVFVAFITAIKVALVVGNMLA) form a helical membrane-spanning segment. Residues 704 to 731 (TTINPIGRTDPDDPNIMILSCHPNYRNG) lie on the Extracellular side of the membrane. Residues 732–752 (LLFNTSMDLLLSVLGFSFAYM) traverse the membrane as a helical segment. Residues 753–764 (GKELPTNYNEAK) are Cytoplasmic-facing. Residues 765–785 (FITLSMTFSFTSSISLCTFMS) traverse the membrane as a helical segment. The Extracellular segment spans residues 786–789 (VHDG). The chain crosses the membrane as a helical span at residues 790-810 (VLVTIMDLLVTVLNFLAIGLG). The Cytoplasmic segment spans residues 811 to 843 (YFGPKCYMILFYPERNTSAYFNSMIQGYTMRKS).

The protein belongs to the G-protein coupled receptor 3 family. TAS1R subfamily. Forms heterodimers with TAS1R3. As to expression, abundantly expressed in circumvallate and foliate papillae.

The protein resides in the cell membrane. In terms of biological role, putative taste receptor. TAS1R2/TAS1R3 recognizes diverse natural and synthetic sweeteners. This Rattus norvegicus (Rat) protein is Taste receptor type 1 member 2 (Tas1r2).